The chain runs to 88 residues: Small ribosomal subunit protein bS20 (88 aa).

Belongs to the bacterial ribosomal protein bS20 family.

Functionally, binds directly to 16S ribosomal RNA. The polypeptide is Small ribosomal subunit protein bS20 (Renibacterium salmoninarum (strain ATCC 33209 / DSM 20767 / JCM 11484 / NBRC 15589 / NCIMB 2235)).